The following is a 71-amino-acid chain: Small integral membrane protein 31 (71 aa).

Residues 8–28 form a helical membrane-spanning segment; it reads LEMAFILLAFVIFSLFTLASI. Positions 31–71 are disordered; it reads TPDDSNEEEEHEKKGREKKRKKSEKKKNCSEEEHRIEAVEL. A compositionally biased stretch (basic residues) spans 46–55; that stretch reads REKKRKKSEK. The span at 56-71 shows a compositional bias: basic and acidic residues; it reads KKNCSEEEHRIEAVEL. Asparagine 58 carries an N-linked (GlcNAc...) asparagine glycan.

It localises to the membrane. This chain is Small integral membrane protein 31, found in Homo sapiens (Human).